A 370-amino-acid chain; its full sequence is Small ribosomal subunit biogenesis GTPase RsgA (370 aa).

The 160-residue stretch at 111-270 (RSEGQILAAN…LIDTPGLRGV (160 aa)) folds into the CP-type G domain. GTP is bound by residues 158–161 (TKAD) and 212–220 (GQSGAGKST). Zn(2+)-binding residues include Cys-293, Cys-298, His-300, and Cys-306.

This sequence belongs to the TRAFAC class YlqF/YawG GTPase family. RsgA subfamily. Monomer. Associates with 30S ribosomal subunit, binds 16S rRNA. The cofactor is Zn(2+).

It localises to the cytoplasm. Functionally, one of several proteins that assist in the late maturation steps of the functional core of the 30S ribosomal subunit. Helps release RbfA from mature subunits. May play a role in the assembly of ribosomal proteins into the subunit. Circularly permuted GTPase that catalyzes slow GTP hydrolysis, GTPase activity is stimulated by the 30S ribosomal subunit. The polypeptide is Small ribosomal subunit biogenesis GTPase RsgA (Streptomyces avermitilis (strain ATCC 31267 / DSM 46492 / JCM 5070 / NBRC 14893 / NCIMB 12804 / NRRL 8165 / MA-4680)).